We begin with the raw amino-acid sequence, 196 residues long: ATP-dependent Clp protease proteolytic subunit (196 aa).

The active-site Nucleophile is S98. The active site involves H123.

The protein belongs to the peptidase S14 family. As to quaternary structure, fourteen ClpP subunits assemble into 2 heptameric rings which stack back to back to give a disk-like structure with a central cavity, resembling the structure of eukaryotic proteasomes.

Its subcellular location is the cytoplasm. It carries out the reaction Hydrolysis of proteins to small peptides in the presence of ATP and magnesium. alpha-casein is the usual test substrate. In the absence of ATP, only oligopeptides shorter than five residues are hydrolyzed (such as succinyl-Leu-Tyr-|-NHMec, and Leu-Tyr-Leu-|-Tyr-Trp, in which cleavage of the -Tyr-|-Leu- and -Tyr-|-Trp bonds also occurs).. Functionally, cleaves peptides in various proteins in a process that requires ATP hydrolysis. Has a chymotrypsin-like activity. Plays a major role in the degradation of misfolded proteins. In Lactiplantibacillus plantarum (strain ATCC BAA-793 / NCIMB 8826 / WCFS1) (Lactobacillus plantarum), this protein is ATP-dependent Clp protease proteolytic subunit.